The primary structure comprises 88 residues: Small ribosomal subunit protein bS20 (88 aa).

Residues 1–25 (MANSAQARKRARQAVAQNAHNSSLR) form a disordered region.

This sequence belongs to the bacterial ribosomal protein bS20 family.

In terms of biological role, binds directly to 16S ribosomal RNA. The sequence is that of Small ribosomal subunit protein bS20 from Cupriavidus pinatubonensis (strain JMP 134 / LMG 1197) (Cupriavidus necator (strain JMP 134)).